The following is a 605-amino-acid chain: Probable potassium transport system protein Kup (605 aa).

The next 12 helical transmembrane spans lie at 18–38, 46–66, 97–117, 138–158, 169–189, 204–224, 247–267, 287–307, 339–359, 368–388, 395–415, and 418–438; these read GLVF…IIAL, ILGI…LEYA, MAFV…DGVI, GLSQ…LFVF, AFGP…AISV, AISF…EVIL, AWYF…AFII, FYIP…QALI, IYIG…MLVF, AYGF…TMIF, WKVP…VSNC, and LPHG…VILI.

It belongs to the HAK/KUP transporter (TC 2.A.72) family.

It is found in the cell inner membrane. It carries out the reaction K(+)(in) + H(+)(in) = K(+)(out) + H(+)(out). Transport of potassium into the cell. Likely operates as a K(+):H(+) symporter. The polypeptide is Probable potassium transport system protein Kup (Pelobacter propionicus (strain DSM 2379 / NBRC 103807 / OttBd1)).